Reading from the N-terminus, the 636-residue chain is Sodium-dependent nutrient amino acid transporter 1 (636 aa).

Positions 1 to 40 (MELKTMPQNGANNGNPQGNTSNNNNTNDSSNSNSNNNNKT) are disordered. At 1–50 (MELKTMPQNGANNGNPQGNTSNNNNTNDSSNSNSNNNNKTERTNWSNGLE) the chain is on the cytoplasmic side. Low complexity predominate over residues 7 to 40 (PQNGANNGNPQGNTSNNNNTNDSSNSNSNNNNKT). A run of 3 helical transmembrane segments spans residues 51–71 (FLMS…FPFT), 78–98 (GAFL…MYYL), and 131–151 (TICI…YLAV). A glycan (N-linked (GlcNAc...) asparagine) is linked at asparagine 184. A run of 9 helical transmembrane segments spans residues 225 to 245 (PDWK…LVIM), 254 to 274 (AAYF…GRAV), 303 to 323 (AVVQ…MFSS), 337 to 357 (IVTT…FAIL), 397 to 417 (LFSA…IVAL), 436 to 456 (VALV…TPGG), 469 to 489 (TYVV…IYGV), 511 to 531 (CWLI…MVTI), and 547 to 567 (VAGW…GWWY).

This sequence belongs to the sodium:neurotransmitter symporter (SNF) (TC 2.A.22) family.

The protein localises to the membrane. Functionally, unusual broad substrate spectrum amino acid:sodium cotransporter that promotes absorption of the D isomers of essential amino acids. Neutral amino acids are the preferred substrates, especially methionine and phenylalanine. This chain is Sodium-dependent nutrient amino acid transporter 1, found in Drosophila grimshawi (Hawaiian fruit fly).